Consider the following 370-residue polypeptide: Flagellar P-ring protein 1 (370 aa).

The N-terminal stretch at 1-25 (MSVLIKTRHCFVLLGLWLVLPTASA) is a signal peptide.

It belongs to the FlgI family. As to quaternary structure, the basal body constitutes a major portion of the flagellar organelle and consists of four rings (L,P,S, and M) mounted on a central rod.

Its subcellular location is the periplasm. The protein resides in the bacterial flagellum basal body. In terms of biological role, assembles around the rod to form the L-ring and probably protects the motor/basal body from shearing forces during rotation. The protein is Flagellar P-ring protein 1 of Yersinia pestis.